A 450-amino-acid chain; its full sequence is Tubulin alpha-2 chain (450 aa).

Residues glutamine 11, glutamate 71, glycine 144, threonine 145, threonine 179, asparagine 206, and asparagine 228 each coordinate GTP. Glutamate 71 contacts Mg(2+). The active site involves glutamate 254. Threonine 349 carries the phosphothreonine modification. Positions 430–450 (KDYEEVGAEGGDDEDDEGEEY) are disordered. The span at 431-450 (DYEEVGAEGGDDEDDEGEEY) shows a compositional bias: acidic residues.

It belongs to the tubulin family. In terms of assembly, dimer of alpha and beta chains. A typical microtubule is a hollow water-filled tube with an outer diameter of 25 nm and an inner diameter of 15 nM. Alpha-beta heterodimers associate head-to-tail to form protofilaments running lengthwise along the microtubule wall with the beta-tubulin subunit facing the microtubule plus end conferring a structural polarity. Microtubules usually have 13 protofilaments but different protofilament numbers can be found in some organisms and specialized cells. Mg(2+) is required as a cofactor. In terms of processing, undergoes a tyrosination/detyrosination cycle, the cyclic removal and re-addition of a C-terminal tyrosine residue by the enzymes tubulin tyrosine carboxypeptidase (TTCP) and tubulin tyrosine ligase (TTL), respectively. Acetylation of alpha chains at Lys-40 stabilizes microtubules and affects affinity and processivity of microtubule motors. This modification has a role in multiple cellular functions, ranging from cell motility, cell cycle progression or cell differentiation to intracellular trafficking and signaling.

Its subcellular location is the cytoplasm. The protein localises to the cytoskeleton. It carries out the reaction GTP + H2O = GDP + phosphate + H(+). Functionally, tubulin is the major constituent of microtubules, a cylinder consisting of laterally associated linear protofilaments composed of alpha- and beta-tubulin heterodimers. Microtubules grow by the addition of GTP-tubulin dimers to the microtubule end, where a stabilizing cap forms. Below the cap, tubulin dimers are in GDP-bound state, owing to GTPase activity of alpha-tubulin. The sequence is that of Tubulin alpha-2 chain (TUBA2) from Arabidopsis thaliana (Mouse-ear cress).